Reading from the N-terminus, the 97-residue chain is DNA/RNA-binding protein Alba (97 aa).

K15 carries the N6-acetyllysine modification.

The protein belongs to the histone-like Alba family. Acetylated. Acetylation at Lys-15 decreases DNA-binding affinity.

It is found in the cytoplasm. It localises to the chromosome. Binds double-stranded DNA tightly but without sequence specificity. Involved in DNA compaction. This chain is DNA/RNA-binding protein Alba, found in Ignicoccus hospitalis (strain KIN4/I / DSM 18386 / JCM 14125).